Reading from the N-terminus, the 168-residue chain is Alkyl hydroperoxide reductase C (168 aa).

One can recognise a Thioredoxin domain in the interval 1–138 (EFIEVSEESF…LVNKIKAAQY (138 aa)). Cysteine 28 functions as the Cysteine sulfenic acid (-SOH) intermediate in the catalytic mechanism.

The protein belongs to the peroxiredoxin family. AhpC/Prx1 subfamily. As to quaternary structure, homodimer; disulfide-linked, upon oxidation. 5 homodimers assemble to form a ring-like decamer.

It localises to the cytoplasm. The catalysed reaction is a hydroperoxide + NADH + H(+) = an alcohol + NAD(+) + H2O. Functionally, thiol-specific peroxidase that catalyzes the reduction of hydrogen peroxide and organic hydroperoxides to water and alcohols, respectively. Plays a role in cell protection against oxidative stress by detoxifying peroxides. This is Alkyl hydroperoxide reductase C from Ferdinandcohnia aciditolerans (strain JCM 32973 / CCTCC AB 2017280 / YN-1) (Bacillus aciditolerans).